We begin with the raw amino-acid sequence, 221 residues long: Mitochondrial cardiolipin hydrolase (221 aa).

The Mitochondrial intermembrane portion of the chain corresponds to 1–4 (MGRS). Residues 1-38 (MGRSSWRLVFAAGAGLALALEALPWLMRWLLAGRRPRR) form a required for mitochondrial localization region. A helical transmembrane segment spans residues 5-27 (SWRLVFAAGAGLALALEALPWLM). Over 28 to 221 (RWLLAGRRPR…SFFPQKHRGH (194 aa)) the chain is Cytoplasmic. The C3H1-type; atypical zinc-finger motif lies at 44–75 (PSQVTCTEALLQAPGLPPGPSGCPCSLPHSES). A PLD phosphodiesterase domain is found at 148 to 175 (DLGYMHHKFAIVDKKVLITGSLNWTTQA). Active-site residues include histidine 153, lysine 155, and aspartate 160.

It belongs to the phospholipase D family. MitoPLD/Zucchini subfamily. As to quaternary structure, homodimer. Interacts with MOV10L1. Interacts with MIGA1 and MIGA2; possibly facilitating homodimer formation. Interacts with GK2. Predominantly expressed in testis (at protein level) and in growing ovary. Also expressed in the brain, eye and urinary bladder (at protein level), but its levels were low or undetectable in other organs.

The protein localises to the mitochondrion outer membrane. The protein resides in the nucleus membrane. It is found in the cell membrane. It localises to the golgi apparatus. It carries out the reaction a cardiolipin + H2O = a 1,2-diacyl-sn-glycero-3-phospho-(1'-sn-glycerol) + a 1,2-diacyl-sn-glycero-3-phosphate + H(+). Its activity is regulated as follows. Single stranded DNA (ssDNA) hydrolase activity does not depend upon, but is stimulated by the presence of Ca(2+) and Mn(2+). MIGA1 and MIGA2 increase PLD6 self-association affinity and affects the homodimer conformation facilitating its phospholipase activity over the nuclease activity. MYC induces its expression and stimulates its phospholipase activity. In terms of biological role, presents phospholipase and nuclease activities, depending on the different physiological conditions. Interaction with Mitoguardin (MIGA1 or MIGA2) affects the dimer conformation, facilitating the lipase activity over the nuclease activity. Plays a key role in mitochondrial fusion and fission via its phospholipase activity. In its phospholipase role, it uses the mitochondrial lipid cardiolipin as substrate to generate phosphatidate (PA or 1,2-diacyl-sn-glycero-3-phosphate), a second messenger signaling lipid. Production of PA facilitates Mitofusin-mediated fusion, whereas the cleavage of PA by the Lipin family of phosphatases produces diacylgycerol (DAG) which promotes mitochondrial fission. Both Lipin and DAG regulate mitochondrial dynamics and membrane fusion/fission, important processes for adapting mitochondrial metabolism to changes in cell physiology. Mitochondrial fusion enables cells to cope with the increased nucleotide demand during DNA synthesis. Mitochondrial function and dynamics are closely associated with biological processes such as cell growth, proliferation, and differentiation. Mediator of MYC activity, promotes mitochondrial fusion and activates AMPK which in turn inhibits YAP/TAZ, thereby inducing cell growth and proliferation. The endonuclease activity plays a critical role in PIWI-interacting RNA (piRNA) biogenesis during spermatogenesis. Implicated in spermatogenesis and sperm fertility in testicular germ cells, its single strand-specific nuclease activity is critical for the biogenesis/maturation of PIWI-interacting RNA (piRNA). MOV10L1 selectively binds to piRNA precursors and funnels them to the endonuclease that catalyzes the first cleavage step of piRNA processing to generate piRNA intermediate fragments that are subsequently loaded to Piwi proteins. Cleaves either DNA or RNA substrates with similar affinity, producing a 5' phosphate end, in this way it participates in the processing of primary piRNA transcripts. piRNAs provide essential protection against the activity of mobile genetic elements. piRNA-mediated transposon silencing is thus critical for maintaining genome stability, in particular in germline cells when transposons are mobilized as a consequence of wide-spread genomic demethylation. PA may act as signaling molecule in the recognition/transport of the precursor RNAs of primary piRNAs. Interacts with tesmin in testes, suggesting a role in spermatogenesis via association with its interacting partner. This chain is Mitochondrial cardiolipin hydrolase (Pld6), found in Mus musculus (Mouse).